We begin with the raw amino-acid sequence, 224 residues long: Orotidine 5'-phosphate decarboxylase (224 aa).

Substrate-binding positions include aspartate 10, lysine 32, 59 to 68 (DLKLHDIPNT), threonine 115, arginine 175, glutamine 184, glycine 204, and arginine 205. Lysine 61 functions as the Proton donor in the catalytic mechanism.

This sequence belongs to the OMP decarboxylase family. Type 1 subfamily. In terms of assembly, homodimer.

It carries out the reaction orotidine 5'-phosphate + H(+) = UMP + CO2. Its pathway is pyrimidine metabolism; UMP biosynthesis via de novo pathway; UMP from orotate: step 2/2. Catalyzes the decarboxylation of orotidine 5'-monophosphate (OMP) to uridine 5'-monophosphate (UMP). The chain is Orotidine 5'-phosphate decarboxylase from Sphingopyxis alaskensis (strain DSM 13593 / LMG 18877 / RB2256) (Sphingomonas alaskensis).